Reading from the N-terminus, the 417-residue chain is Secernin-3 (417 aa).

The propeptide occupies 1-5 (MYPRS). C6 is a catalytic residue. Residue C6 is modified to Glyoxylic acid (Cys); alternate. C6 bears the Pyruvic acid (Cys); alternate mark.

Belongs to the peptidase C69 family. Secernin subfamily.

In terms of biological role, plays a role in thermal nociception. In Danio rerio (Zebrafish), this protein is Secernin-3 (scrn3).